The primary structure comprises 293 residues: Fructose-bisphosphate aldolase (293 aa).

S50 provides a ligand contact to D-glyceraldehyde 3-phosphate. D85 acts as the Proton donor in catalysis. Residues H86, D106, E136, and H178 each contribute to the Zn(2+) site. Dihydroxyacetone phosphate is bound at residue G179. H208 contributes to the Zn(2+) binding site. Dihydroxyacetone phosphate is bound by residues 209–211 (GGS) and 230–233 (NVNT).

Belongs to the class II fructose-bisphosphate aldolase family. It depends on Zn(2+) as a cofactor.

The catalysed reaction is beta-D-fructose 1,6-bisphosphate = D-glyceraldehyde 3-phosphate + dihydroxyacetone phosphate. It functions in the pathway carbohydrate degradation; glycolysis; D-glyceraldehyde 3-phosphate and glycerone phosphate from D-glucose: step 4/4. Its function is as follows. Catalyzes the aldol condensation of dihydroxyacetone phosphate (DHAP or glycerone-phosphate) with glyceraldehyde 3-phosphate (G3P) to form fructose 1,6-bisphosphate (FBP) in gluconeogenesis and the reverse reaction in glycolysis. This chain is Fructose-bisphosphate aldolase (fba), found in Streptococcus pyogenes serotype M6 (strain ATCC BAA-946 / MGAS10394).